A 148-amino-acid chain; its full sequence is SsrA-binding protein (148 aa).

The segment at 123–148 (KLHDKRETEKKRDWEREKARIMRSAT) is disordered. Positions 126–142 (DKRETEKKRDWEREKAR) are enriched in basic and acidic residues.

This sequence belongs to the SmpB family.

The protein localises to the cytoplasm. Required for rescue of stalled ribosomes mediated by trans-translation. Binds to transfer-messenger RNA (tmRNA), required for stable association of tmRNA with ribosomes. tmRNA and SmpB together mimic tRNA shape, replacing the anticodon stem-loop with SmpB. tmRNA is encoded by the ssrA gene; the 2 termini fold to resemble tRNA(Ala) and it encodes a 'tag peptide', a short internal open reading frame. During trans-translation Ala-aminoacylated tmRNA acts like a tRNA, entering the A-site of stalled ribosomes, displacing the stalled mRNA. The ribosome then switches to translate the ORF on the tmRNA; the nascent peptide is terminated with the 'tag peptide' encoded by the tmRNA and targeted for degradation. The ribosome is freed to recommence translation, which seems to be the essential function of trans-translation. This is SsrA-binding protein from Burkholderia thailandensis (strain ATCC 700388 / DSM 13276 / CCUG 48851 / CIP 106301 / E264).